A 144-amino-acid polypeptide reads, in one-letter code: Large ribosomal subunit protein uL13 (144 aa).

The protein belongs to the universal ribosomal protein uL13 family. As to quaternary structure, part of the 50S ribosomal subunit.

This protein is one of the early assembly proteins of the 50S ribosomal subunit, although it is not seen to bind rRNA by itself. It is important during the early stages of 50S assembly. The sequence is that of Large ribosomal subunit protein uL13 from Nitratidesulfovibrio vulgaris (strain DSM 19637 / Miyazaki F) (Desulfovibrio vulgaris).